The following is an 869-amino-acid chain: Bifunctional uridylyltransferase/uridylyl-removing enzyme (869 aa).

Positions 1-332 (MTDTPAERPD…QFDGEATPEP (332 aa)) are uridylyltransferase. The tract at residues 333–691 (LGGGFSLRRG…RRAVPDNDAL (359 aa)) is uridylyl-removing. One can recognise an HD domain in the interval 450 to 572 (VDQHTLMVLR…VGTRERLDYL (123 aa)). ACT domains follow at residues 692–774 (EVFV…RAVP) and 798–869 (RISL…LDPV).

The protein belongs to the GlnD family. Mg(2+) is required as a cofactor.

It carries out the reaction [protein-PII]-L-tyrosine + UTP = [protein-PII]-uridylyl-L-tyrosine + diphosphate. It catalyses the reaction [protein-PII]-uridylyl-L-tyrosine + H2O = [protein-PII]-L-tyrosine + UMP + H(+). Uridylyltransferase (UTase) activity is inhibited by glutamine, while glutamine activates uridylyl-removing (UR) activity. Modifies, by uridylylation and deuridylylation, the PII regulatory proteins (GlnB and homologs), in response to the nitrogen status of the cell that GlnD senses through the glutamine level. Under low glutamine levels, catalyzes the conversion of the PII proteins and UTP to PII-UMP and PPi, while under higher glutamine levels, GlnD hydrolyzes PII-UMP to PII and UMP (deuridylylation). Thus, controls uridylylation state and activity of the PII proteins, and plays an important role in the regulation of nitrogen assimilation and metabolism. The protein is Bifunctional uridylyltransferase/uridylyl-removing enzyme of Xanthomonas axonopodis pv. citri (strain 306).